We begin with the raw amino-acid sequence, 245 residues long: Bax inhibitor 1 (245 aa).

Residues 1–30 (MADTANYINDRFQTFMNGLGDRYEPYVREH) are Cytoplasmic-facing. Residues 31–51 (LSKVYMVLGSTAAATAMGAML) form a helical membrane-spanning segment. Residues 52 to 55 (QMRD) are Lumenal-facing. The chain crosses the membrane as a helical span at residues 56 to 76 (FLDLGVLAAVATLVLVLGLHF). At 77 to 88 (YKDDGKNYYTRL) the chain is on the cytoplasmic side. Residues 89 to 109 (GMLYAFGFCSGQTLGPLLGYI) form a helical membrane-spanning segment. Over 110-115 (CSINPA) the chain is Lumenal. A helical transmembrane segment spans residues 116-136 (IILSALTGTFVTFISLSLSAL). Over 137 to 142 (LAEQGK) the chain is Cytoplasmic. A helical membrane pass occupies residues 143–163 (YLYLGGMLVSVINTMALLSLF). The Lumenal segment spans residues 164–169 (NMVFKS). The chain crosses the membrane as a helical span at residues 170–190 (YFVQVTQLYVGVFVMAAFIVY). Topologically, residues 191-245 (DTQNIVEKCRNGNRDVVQHALDLFFDVLSMFRRLLIILTQKEERKQNERRQNKTK) are cytoplasmic.

This sequence belongs to the BI1 family.

Its subcellular location is the endoplasmic reticulum membrane. Its function is as follows. Suppressor of apoptosis. Modulates unfolded protein response signaling. Negatively regulates autophagy and autophagosome formation, especially during periods of nutrient deprivation, and reduces cell survival during starvation. This is Bax inhibitor 1 from Drosophila melanogaster (Fruit fly).